A 1050-amino-acid polypeptide reads, in one-letter code: Diacylglycerol kinase iota (1050 aa).

Disordered regions lie at residues P53 to A74, A92 to E111, and S328 to G356. Residues A92–G105 show a composition bias toward low complexity. Residues S332–K347 are compositionally biased toward basic residues. Residues P367–N502 form the DAGKc domain. ANK repeat units follow at residues G943 to L972 and T979 to Q1008. The short motif at T1048–V1050 is the PDZ-binding element.

This sequence belongs to the eukaryotic diacylglycerol kinase family. As to quaternary structure, interacts (via PDZ-binding motif) with DLG4; controls the localization of DGKI to the synapse. Interacts (via PDZ-binding motif) with DLG1. Interacts (via PDZ-binding motif) with DLG2. Interacts (via PDZ-binding motif) with DLG3. May interact with RASGRP3; involved in the regulation of RASGRP3 activity. As to expression, in brain, expressed in the hippocampus and cerebellum with stronger expression in the Purkinje cell layer (at protein level). Expressed in kidney.

The protein localises to the cell projection. The protein resides in the axon. It is found in the dendrite. Its subcellular location is the presynapse. It localises to the postsynapse. The protein localises to the postsynaptic density. The protein resides in the synaptic cell membrane. It is found in the cytoplasmic vesicle. Its subcellular location is the secretory vesicle. It localises to the synaptic vesicle membrane. The protein localises to the cytoplasm. The protein resides in the cytosol. It is found in the nucleus. It catalyses the reaction a 1,2-diacyl-sn-glycerol + ATP = a 1,2-diacyl-sn-glycero-3-phosphate + ADP + H(+). The catalysed reaction is 1,2-di-(9Z-octadecenoyl)-sn-glycerol + ATP = 1,2-di-(9Z-octadecenoyl)-sn-glycero-3-phosphate + ADP + H(+). The enzyme catalyses 1-octadecanoyl-2-(5Z,8Z,11Z,14Z-eicosatetraenoyl)-sn-glycerol + ATP = 1-octadecanoyl-2-(5Z,8Z,11Z,14Z-eicosatetraenoyl)-sn-glycero-3-phosphate + ADP + H(+). It carries out the reaction 1-octadecanoyl-2-(9Z,12Z)-octadecadienoyl-sn-glycerol + ATP = 1-octadecanoyl-2-(9Z,12Z-octadecadienoyl)-sn-glycero-3-phosphate + ADP + H(+). It functions in the pathway lipid metabolism; glycerolipid metabolism. In terms of biological role, diacylglycerol kinase that converts diacylglycerol/DAG into phosphatidic acid/phosphatidate/PA and regulates the respective levels of these two bioactive lipids. Thereby, acts as a central switch between the signaling pathways activated by these second messengers with different cellular targets and opposite effects in numerous biological processes. Has probably no preference for any of the diacylglycerols in terms of the acyl chain composition, especially for the acyl chain at the sn-2 position. By controlling the diacylglycerol/DAG-mediated activation of RASGRP3, negatively regulates the Rap1 signaling pathway. May play a role in presynaptic diacylglycerol/DAG signaling and control neurotransmitter release during metabotropic glutamate receptor-dependent long-term depression. The protein is Diacylglycerol kinase iota of Mus musculus (Mouse).